We begin with the raw amino-acid sequence, 201 residues long: Glutathione peroxidase 1 (201 aa).

Ser-32 bears the Phosphoserine mark. Sec-47 is a catalytic residue. Residue Sec-47 is a non-standard amino acid, selenocysteine. Lys-86, Lys-112, and Lys-146 each carry N6-acetyllysine; alternate. N6-succinyllysine; alternate occurs at positions 86, 112, and 146. 2 positions are modified to phosphoserine: Ser-195 and Ser-199.

The protein belongs to the glutathione peroxidase family. Homotetramer. Interacts with MIEN1. During periods of oxidative stress, Sec-47 may react with a superoxide radical, irreversibly lose hydroselenide and be converted to dehydroalanine.

The protein resides in the cytoplasm. It is found in the mitochondrion. The catalysed reaction is 2 glutathione + H2O2 = glutathione disulfide + 2 H2O. It catalyses the reaction a hydroperoxy polyunsaturated fatty acid + 2 glutathione = a hydroxy polyunsaturated fatty acid + glutathione disulfide + H2O. It carries out the reaction tert-butyl hydroperoxide + 2 glutathione = tert-butanol + glutathione disulfide + H2O. The enzyme catalyses cumene hydroperoxide + 2 glutathione = 2-phenylpropan-2-ol + glutathione disulfide + H2O. The catalysed reaction is (13S)-hydroperoxy-(9Z,11E)-octadecadienoate + 2 glutathione = (13S)-hydroxy-(9Z,11E)-octadecadienoate + glutathione disulfide + H2O. It catalyses the reaction (9S)-hydroperoxy-(10E,12Z)-octadecadienoate + 2 glutathione = (9S)-hydroxy-(10E,12Z)-octadecadienoate + glutathione disulfide + H2O. It carries out the reaction (5S)-hydroperoxy-(6E,8Z,11Z,14Z)-eicosatetraenoate + 2 glutathione = (5S)-hydroxy-(6E,8Z,11Z,14Z)-eicosatetraenoate + glutathione disulfide + H2O. The enzyme catalyses (12S)-hydroperoxy-(5Z,8Z,10E,14Z)-eicosatetraenoate + 2 glutathione = (12S)-hydroxy-(5Z,8Z,10E,14Z)-eicosatetraenoate + glutathione disulfide + H2O. The catalysed reaction is (12R)-hydroperoxy-(5Z,8Z,10E,14Z)-eicosatetraenoate + 2 glutathione = (12R)-hydroxy-(5Z,8Z,10E,14Z)-eicosatetraenoate + glutathione disulfide + H2O. It catalyses the reaction (15S)-hydroperoxy-(5Z,8Z,11Z,13E)-eicosatetraenoate + 2 glutathione = (15S)-hydroxy-(5Z,8Z,11Z,13E)-eicosatetraenoate + glutathione disulfide + H2O. It carries out the reaction (5S)-hydroperoxy-(6E,8Z,11Z,14Z,17Z)-eicosapentaenoate + 2 glutathione = (5S)-hydroxy-(6E,8Z,11Z,14Z,17Z)-eicosapentaenoate + glutathione disulfide + H2O. The enzyme catalyses (12S)-hydroperoxy-(5Z,8Z,10E,14Z,17Z)-eicosapentaenoate + 2 glutathione = (12S)-hydroxy-(5Z,8Z,10E,14Z,17Z)-eicosapentaenoate + glutathione disulfide + H2O. The catalysed reaction is (15S)-hydroperoxy-(5Z,8Z,11Z,13E,17Z)-eicosapentaenoate + 2 glutathione = (15S)-hydroxy-(5Z,8Z,11Z,13E,17Z)-eicosapentaenoate + glutathione disulfide + H2O. It catalyses the reaction (15S)-hydroperoxy-(11Z,13E)-eicosadienoate + 2 glutathione = (15S)-hydroxy-(11Z,13E)-eicosadienoate + glutathione disulfide + H2O. It carries out the reaction (17S)-hydroperoxy-(4Z,7Z,10Z,13Z,15E,19Z)-docosahexaenoate + 2 glutathione = (17S)-hydroxy-(4Z,7Z,10Z,13Z,15E,19Z)-docosahexaenoate + glutathione disulfide + H2O. Catalyzes the reduction of hydroperoxides in a glutathione-dependent manner thus regulating cellular redox homeostasis. Can reduce small soluble hydroperoxides such as H2O2, cumene hydroperoxide and tert-butyl hydroperoxide, as well as several fatty acid-derived hydroperoxides. In platelets catalyzes the reduction of 12-hydroperoxyeicosatetraenoic acid, the primary product of the arachidonate 12-lipoxygenase pathway. This Pongo pygmaeus (Bornean orangutan) protein is Glutathione peroxidase 1 (GPX1).